A 429-amino-acid polypeptide reads, in one-letter code: Argininosuccinate lyase (429 aa).

This sequence belongs to the lyase 1 family. Argininosuccinate lyase subfamily.

It localises to the cytoplasm. It carries out the reaction 2-(N(omega)-L-arginino)succinate = fumarate + L-arginine. The protein operates within amino-acid biosynthesis; L-arginine biosynthesis; L-arginine from L-ornithine and carbamoyl phosphate: step 3/3. The polypeptide is Argininosuccinate lyase (Pyrobaculum aerophilum (strain ATCC 51768 / DSM 7523 / JCM 9630 / CIP 104966 / NBRC 100827 / IM2)).